The sequence spans 151 residues: Glycine and methionine-rich protein (151 aa).

A signal peptide spans 1 to 19; it reads MKTAVVLAAFSALMALARA.

In terms of tissue distribution, component of the acid-insoluble and acid-soluble organic matrix of calcified layers of the shell (at protein level).

Its subcellular location is the secreted. In Lottia gigantea (Giant owl limpet), this protein is Glycine and methionine-rich protein.